The primary structure comprises 132 residues: uncharacterized protein (132 aa).

This is an uncharacterized protein from Archaeoglobus fulgidus (strain ATCC 49558 / DSM 4304 / JCM 9628 / NBRC 100126 / VC-16).